We begin with the raw amino-acid sequence, 157 residues long: Large ribosomal subunit protein uL10 (157 aa).

Belongs to the universal ribosomal protein uL10 family. As to quaternary structure, part of the ribosomal stalk of the 50S ribosomal subunit. The N-terminus interacts with L11 and the large rRNA to form the base of the stalk. The C-terminus forms an elongated spine to which L12 dimers bind in a sequential fashion forming a multimeric L10(L12)X complex.

Its function is as follows. Forms part of the ribosomal stalk, playing a central role in the interaction of the ribosome with GTP-bound translation factors. This chain is Large ribosomal subunit protein uL10, found in Campylobacter hominis (strain ATCC BAA-381 / DSM 21671 / CCUG 45161 / LMG 19568 / NCTC 13146 / CH001A).